A 45-amino-acid polypeptide reads, in one-letter code: Turripeptide OL11-like (45 aa).

Intrachain disulfides connect Cys1-Cys31, Cys5-Cys24, and Cys13-Cys45. In terms of domain architecture, Kazal-like spans 1 to 45; that stretch reads CMTICTMEYWPVCGSDGKTYPNKCHLTSTACTSQKDITVLHEGKC.

It belongs to the conopeptide P-like superfamily. As to expression, expressed by the venom duct.

The protein resides in the secreted. In terms of biological role, acts as a neurotoxin by inhibiting an ion channel. May also act as a serine protease inhibitor, since it possess the kazal serine protease inhibitor signature. The chain is Turripeptide OL11-like from Lophiotoma albina (Sea snail).